The following is a 360-amino-acid chain: SPRY domain-containing SOCS box protein 3 (360 aa).

The interval 20–55 (RDQDARSPTLPAEEEAWGYDSDGQHSNSDSDTDLLH) is disordered. Residues 85-274 (LHTFHQIKSC…MKVIRSCCCR (190 aa)) form the B30.2/SPRY domain. Residues 264–315 (SMKVIRSCCCRTSLQYLCCARLRQLLPDSVDSLEVLPLPPGLKQVLGNKLGW) enclose the SOCS box domain. The disordered stretch occupies residues 323-350 (RSNQHKGDTSATTSCGSDSDSSCTPGQD). A compositionally biased stretch (low complexity) spans 331–346 (TSATTSCGSDSDSSCT).

It belongs to the SPSB family. In terms of assembly, substrate-recognition component of the ECS(SPSB3) complex, composed of spsb3, cul5, elob, elob and rnf7/rbx2.

Its subcellular location is the nucleus. It functions in the pathway protein modification; protein ubiquitination. Functionally, substrate-recognition component of a cullin-5-RING E3 ubiquitin-protein ligase complex (ECS complex, also named CRL5 complex), which mediates the ubiquitination and subsequent proteasomal degradation of target proteins. The chain is SPRY domain-containing SOCS box protein 3 (spsb3) from Xenopus tropicalis (Western clawed frog).